The following is a 296-amino-acid chain: UDP-N-acetylglucosamine transporter TMEM241 homolog (296 aa).

10 helical membrane passes run Ala-7–Val-29, Trp-41–Ile-61, Ser-67–Ser-87, Leu-93–Gln-113, Ile-126–Phe-146, Asp-147–Phe-167, Val-187–Leu-207, Phe-217–Lys-237, Ala-248–Phe-266, and Val-272–Ala-291.

This sequence belongs to the nucleotide-sugar transporter family. SLC35A subfamily.

The protein resides in the golgi apparatus. The protein localises to the cis-Golgi network membrane. In terms of biological role, golgi-localized UDP-N-acetylglucosamine (UDP-GlcNAc) transporter that transports UDP-N-acetylglucosamine into Golgi lumen. The chain is UDP-N-acetylglucosamine transporter TMEM241 homolog (tmem241) from Xenopus laevis (African clawed frog).